The chain runs to 348 residues: Dihydroorotase (348 aa).

Zn(2+) is bound by residues His17 and His19. Substrate-binding positions include 19 to 21 and Asn45; that span reads HLR. The Zn(2+) site is built by Lys103, His140, and His178. Lys103 carries the N6-carboxylysine modification. Position 140 (His140) interacts with substrate. Leu223 is a substrate binding site. Asp251 serves as a coordination point for Zn(2+). Residue Asp251 is part of the active site. Substrate-binding residues include His255 and Ala267.

This sequence belongs to the metallo-dependent hydrolases superfamily. DHOase family. Class II DHOase subfamily. As to quaternary structure, homodimer. Zn(2+) serves as cofactor.

It catalyses the reaction (S)-dihydroorotate + H2O = N-carbamoyl-L-aspartate + H(+). It participates in pyrimidine metabolism; UMP biosynthesis via de novo pathway; (S)-dihydroorotate from bicarbonate: step 3/3. Catalyzes the reversible cyclization of carbamoyl aspartate to dihydroorotate. The protein is Dihydroorotase of Escherichia coli (strain UTI89 / UPEC).